The sequence spans 199 residues: uncharacterized protein (199 aa).

A helical membrane pass occupies residues 17–37 (AGAVTLGIGFFALASALWFLI).

It localises to the membrane. This is an uncharacterized protein from Homo sapiens (Human).